The following is a 349-amino-acid chain: Microbial Terpene synthase-like protein 1 (349 aa).

The Mg(2+) site is built by Asp-98, Asp-102, Asn-243, and Ser-247. Positions 98 to 102 match the DDXXD motif motif; it reads DDILD.

The protein belongs to the terpene synthase family. It depends on Mg(2+) as a cofactor.

It functions in the pathway secondary metabolite biosynthesis; terpenoid biosynthesis. Its function is as follows. Sesquiterpene synthase converting farnesyl diphosphate to six sesquiterpenes, with beta-elemene, delta-cadinene and an unidentified oxygenated sesquiterpene as the major products. Has no diterpene synthase activity. This Selaginella moellendorffii (Spikemoss) protein is Microbial Terpene synthase-like protein 1.